The sequence spans 1002 residues: Eukaryotic translation initiation factor 5B (1002 aa).

Disordered stretches follow at residues 1-172 and 184-402; these read MAKK…GLAA and EEQE…NKKD. The span at 13–23 shows a compositional bias: acidic residues; the sequence is WDEEFEEDAAQ. The segment covering 27-37 has biased composition (polar residues); the sequence is ISATPTPNPES. Residues 47–57 are compositionally biased toward low complexity; the sequence is EASASAEGAEA. Composition is skewed to basic and acidic residues over residues 75-111 and 120-154; these read KKVI…EQAA and QKEK…ESDK. Residues 155 to 172 show a composition bias toward low complexity; that stretch reads PSASAKKPAKKVPAGLAA. Basic and acidic residues-rich tracts occupy residues 184-252 and 267-276; these read EEQE…ERRR and AKKDGEENKP. Positions 277-287 are enriched in basic residues; the sequence is KKVVYSKKKKR. Residues 297–306 are compositionally biased toward basic and acidic residues; that stretch reads IKSDSKKDSE. 2 stretches are compositionally biased toward acidic residues: residues 307 to 342 and 352 to 370; these read VVPD…EETQ and DQNQ…EEEE. A compositionally biased stretch (low complexity) spans 381–398; it reads STPAATPAATPTPSSASP. A tr-type G domain is found at 403–621; the sequence is LRSPICCILG…LLELTQKRMS (219 aa). Ser-405 is modified (phosphoserine). The interval 412 to 419 is G1; that stretch reads GHVDTGKT. Asp-415 serves as a coordination point for K(+). Asp-415 provides a ligand contact to Na(+). GTP contacts are provided by residues 415–420, Gln-431, and 437–439; these read DTGKTK and GIT. Thr-419 is a Mg(2+) binding site. Gly-437 provides a ligand contact to K(+). Gly-437 provides a ligand contact to Na(+). The tract at residues 437-441 is G2; sequence GITQQ. Thr-439 contributes to the Mg(2+) binding site. A G3 region spans residues 476–479; that stretch reads DTPG. Residues 530 to 533 and 599 to 600 contribute to the GTP site; these read NKID and AV. The interval 530 to 533 is G4; it reads NKID. Positions 598–600 are G5; the sequence is SAV.

This sequence belongs to the TRAFAC class translation factor GTPase superfamily. Classic translation factor GTPase family. IF-2 subfamily. Na(+) is required as a cofactor. Requires K(+) as cofactor.

The protein resides in the cytoplasm. The enzyme catalyses GTP + H2O = GDP + phosphate + H(+). In terms of biological role, plays a role in translation initiation. Translational GTPase that catalyzes the joining of the 40S and 60S subunits to form the 80S initiation complex with the initiator methionine-tRNA in the P-site base paired to the start codon. GTP binding and hydrolysis induces conformational changes in the enzyme that renders it active for productive interactions with the ribosome. The release of the enzyme after formation of the initiation complex is a prerequisite to form elongation-competent ribosomes. Stimulates 20S pre-rRNA cleavage to mature 18S rRNA by PIN-domain endonuclease NOB1. In Saccharomyces cerevisiae (strain ATCC 204508 / S288c) (Baker's yeast), this protein is Eukaryotic translation initiation factor 5B.